Consider the following 307-residue polypeptide: Putative serine/threonine-protein phosphatase C22H10.04 (307 aa).

Mn(2+)-binding residues include aspartate 51, histidine 53, aspartate 79, and asparagine 111. Histidine 112 (proton donor) is an active-site residue. Mn(2+)-binding residues include histidine 161 and histidine 236.

Belongs to the PPP phosphatase family. PP-X subfamily. Mn(2+) serves as cofactor.

The catalysed reaction is O-phospho-L-seryl-[protein] + H2O = L-seryl-[protein] + phosphate. It catalyses the reaction O-phospho-L-threonyl-[protein] + H2O = L-threonyl-[protein] + phosphate. This chain is Putative serine/threonine-protein phosphatase C22H10.04, found in Schizosaccharomyces pombe (strain 972 / ATCC 24843) (Fission yeast).